Reading from the N-terminus, the 548-residue chain is MWAPEEDYKQPLLTNSRVANNGNNNNSNGRGGSSSPSTRLQPEHSSRKCNDILFTILFLLVIGGMAAISGIAYTKGDPSRLVPNAPNIPSIPGFNTNTTSSENPIEQYFVSHLESLVAELKRDKDILIYSVLLAIALGAAWIQLLKSFTRFFIYFTLCVGVALVATLGGLFMALGHKEGSESTMIVGGCIIICTLVLVVVIVYLRKSIDLTCAMFTETCRGVQRSPSVFVIASLVVLFFIGFIAYWTSSFIYLFSIPGSTVNPLNDHTSSEANSTDSEQEQSAFNTKIRNLMYFMIFGFFWASSFISAVFQHCVAGVVSNWYFSRDPTGKSLVGQENAYRSLGRALSTSFGSLAFGSLLIAFIEFMAFMLRVCKNSNATNKLVVMVVSCLQCILGCIESIVRWINKFGYIYVAMHGHSFCTSTKECFDLISRNMFNAVIMDFIGGLVLLLGKILGSAASALFTTALLYGMGKSLNPITIALSAIFAFCIFNLFTHIVGIGTDTIFVCYLEDLETNKDGNLYISPDLHELLQDKCNECKEKEQKNQSKV.

A disordered region spans residues 1-44 (MWAPEEDYKQPLLTNSRVANNGNNNNSNGRGGSSSPSTRLQPEH). The N-linked (GlcNAc...) asparagine glycan is linked to Asn25. A helical transmembrane segment spans residues 52-72 (ILFTILFLLVIGGMAAISGIA). Residue Asn97 is glycosylated (N-linked (GlcNAc...) asparagine). The next 4 membrane-spanning stretches (helical) occupy residues 125–145 (DILI…IQLL), 151–171 (FFIY…GGLF), 184–204 (MIVG…IVYL), and 226–246 (PSVF…IAYW). Asn273 carries an N-linked (GlcNAc...) asparagine glycan. The next 2 membrane-spanning stretches (helical) occupy residues 290–310 (NLMY…SAVF) and 350–370 (FGSL…AFML). Asn377 carries N-linked (GlcNAc...) asparagine glycosylation. 3 helical membrane-spanning segments follow: residues 381–401 (KLVV…ESIV), 442–462 (FIGG…SALF), and 479–499 (IALS…IVGI). N-linked (GlcNAc...) asparagine glycosylation occurs at Asn544.

This sequence belongs to the CTL (choline transporter-like) family.

The protein resides in the membrane. This chain is CTL-like protein DDB_G0288717, found in Dictyostelium discoideum (Social amoeba).